The following is a 281-amino-acid chain: 2-dehydro-3-deoxyphosphooctonate aldolase (281 aa).

It belongs to the KdsA family.

It is found in the cytoplasm. The enzyme catalyses D-arabinose 5-phosphate + phosphoenolpyruvate + H2O = 3-deoxy-alpha-D-manno-2-octulosonate-8-phosphate + phosphate. Its pathway is carbohydrate biosynthesis; 3-deoxy-D-manno-octulosonate biosynthesis; 3-deoxy-D-manno-octulosonate from D-ribulose 5-phosphate: step 2/3. It functions in the pathway bacterial outer membrane biogenesis; lipopolysaccharide biosynthesis. The chain is 2-dehydro-3-deoxyphosphooctonate aldolase from Pseudomonas putida (strain GB-1).